Reading from the N-terminus, the 261-residue chain is uncharacterized protein (261 aa).

The signal sequence occupies residues 1–22 (MRDSKRVVLYISIIVLSIFIIG). A lipid anchor (N-palmitoyl cysteine) is attached at Cys-23. A lipid anchor (S-diacylglycerol cysteine) is attached at Cys-23.

This sequence belongs to the staphylococcal tandem lipoprotein family.

It localises to the cell membrane. This is an uncharacterized protein from Staphylococcus aureus (strain Mu50 / ATCC 700699).